A 122-amino-acid chain; its full sequence is Large ribosomal subunit protein uL18 (122 aa).

Residues 1 to 21 show a composition bias toward basic residues; sequence MSKLSRKQQTQKRHRRLRRHI. A disordered region spans residues 1 to 25; that stretch reads MSKLSRKQQTQKRHRRLRRHITGTS.

Belongs to the universal ribosomal protein uL18 family. In terms of assembly, part of the 50S ribosomal subunit; part of the 5S rRNA/L5/L18/L25 subcomplex. Contacts the 5S and 23S rRNAs.

This is one of the proteins that bind and probably mediate the attachment of the 5S RNA into the large ribosomal subunit, where it forms part of the central protuberance. This chain is Large ribosomal subunit protein uL18, found in Synechococcus sp. (strain CC9902).